Here is a 444-residue protein sequence, read N- to C-terminus: MPAARTGTLAAVALILLCGAAVLGRPAPDDLCFADVRRTGMAPSRPLGPVLNLAASDLTSRVSVRAVDASRGCALALLDMAETVVPGGPRAADVVDVGWAYQDGDCMVPLAYRQYFNCTGGALPGQNVCAGLSETRIRGGFGTSDYALYGTSLVLRPGLYDRGTYIYFLGYGPDDIYVGSVTLMVGADIHKYPCGLDRGLGVALHHKSGPARPLTEDDATGDWACGCFPAVVEVDVVWGNVSAAELGLADPIDYADEGGEVEVLEDEAGSASGNLPQDDPDPDLADCRTVGLFSESDMFRTARGPESLLIGAVAKDVLTVPLNLPPGRSYEALRNASLECNSRPRETGDAAVVVMSLQEPARLERRPDARATDPEFGLFGLPDDPAVRRGILIGLAIALLVLLFSLVIVLVCACRLARAAKAARRARAATFAKSNPAYEPMLRV.

The first 24 residues, 1 to 24 (MPAARTGTLAAVALILLCGAAVLG), serve as a signal peptide directing secretion. Asparagine 117, asparagine 240, and asparagine 335 each carry an N-linked (GlcNAc...) asparagine; by host glycan. The helical transmembrane segment at 390 to 414 (GILIGLAIALLVLLFSLVIVLVCAC) threads the bilayer.

Belongs to the herpesviridae glycoprotein G family.

The protein resides in the membrane. The sequence is that of Glycoprotein GX from Bos taurus (Bovine).